Reading from the N-terminus, the 172-residue chain is Adenine phosphoribosyltransferase (172 aa).

This sequence belongs to the purine/pyrimidine phosphoribosyltransferase family. Homodimer.

Its subcellular location is the cytoplasm. It carries out the reaction AMP + diphosphate = 5-phospho-alpha-D-ribose 1-diphosphate + adenine. Its pathway is purine metabolism; AMP biosynthesis via salvage pathway; AMP from adenine: step 1/1. In terms of biological role, catalyzes a salvage reaction resulting in the formation of AMP, that is energically less costly than de novo synthesis. The protein is Adenine phosphoribosyltransferase of Ligilactobacillus salivarius (strain UCC118) (Lactobacillus salivarius).